The primary structure comprises 208 residues: Na(+)-translocating NADH-quinone reductase subunit D (208 aa).

A run of 5 helical transmembrane segments spans residues 42–62 (FVMA…VSLI), 72–92 (IIVQ…ILKA), 103–123 (VFVG…AFAM), 131–151 (FVDG…VAFF), and 178–198 (NGLF…IWGL).

It belongs to the NqrDE/RnfAE family. As to quaternary structure, composed of six subunits; NqrA, NqrB, NqrC, NqrD, NqrE and NqrF.

Its subcellular location is the cell inner membrane. It carries out the reaction a ubiquinone + n Na(+)(in) + NADH + H(+) = a ubiquinol + n Na(+)(out) + NAD(+). Functionally, NQR complex catalyzes the reduction of ubiquinone-1 to ubiquinol by two successive reactions, coupled with the transport of Na(+) ions from the cytoplasm to the periplasm. NqrA to NqrE are probably involved in the second step, the conversion of ubisemiquinone to ubiquinol. The chain is Na(+)-translocating NADH-quinone reductase subunit D from Haemophilus influenzae (strain 86-028NP).